Consider the following 208-residue polypeptide: MSIEKAKEDFKYLINRGYKKDVALNFVANHYKLSKEDRLKIIRTTHSDKEIKLTKRKLKKLKDFKGKTIYIDGFNVLISLEALIKGNKIVLCDDNIYRDFENVYGKYKINEYSDKAISLLLEILKHYNIKAVIYLDAQVSKSGILAKKIREKMKAFSIEGEVFCVKNCDYELKNKEVVATSDSVIIKSENVKYVVDLIAEAIEYLKKK.

This is an uncharacterized protein from Methanocaldococcus jannaschii (strain ATCC 43067 / DSM 2661 / JAL-1 / JCM 10045 / NBRC 100440) (Methanococcus jannaschii).